Consider the following 502-residue polypeptide: ATP synthase subunit alpha (502 aa).

169-176 (GDRQTGKT) serves as a coordination point for ATP.

It belongs to the ATPase alpha/beta chains family. F-type ATPases have 2 components, CF(1) - the catalytic core - and CF(0) - the membrane proton channel. CF(1) has five subunits: alpha(3), beta(3), gamma(1), delta(1), epsilon(1). CF(0) has three main subunits: a(1), b(2) and c(9-12). The alpha and beta chains form an alternating ring which encloses part of the gamma chain. CF(1) is attached to CF(0) by a central stalk formed by the gamma and epsilon chains, while a peripheral stalk is formed by the delta and b chains.

The protein resides in the cell membrane. The enzyme catalyses ATP + H2O + 4 H(+)(in) = ADP + phosphate + 5 H(+)(out). Produces ATP from ADP in the presence of a proton gradient across the membrane. The alpha chain is a regulatory subunit. This chain is ATP synthase subunit alpha, found in Bacillus pumilus (strain SAFR-032).